We begin with the raw amino-acid sequence, 316 residues long: Methionyl-tRNA formyltransferase (316 aa).

Gly-112–Pro-115 is a binding site for (6S)-5,6,7,8-tetrahydrofolate.

This sequence belongs to the Fmt family.

The catalysed reaction is L-methionyl-tRNA(fMet) + (6R)-10-formyltetrahydrofolate = N-formyl-L-methionyl-tRNA(fMet) + (6S)-5,6,7,8-tetrahydrofolate + H(+). Its function is as follows. Attaches a formyl group to the free amino group of methionyl-tRNA(fMet). The formyl group appears to play a dual role in the initiator identity of N-formylmethionyl-tRNA by promoting its recognition by IF2 and preventing the misappropriation of this tRNA by the elongation apparatus. The polypeptide is Methionyl-tRNA formyltransferase (Chlamydia muridarum (strain MoPn / Nigg)).